Reading from the N-terminus, the 430-residue chain is Retinoic acid receptor RXR-alpha-A (430 aa).

A compositionally biased stretch (low complexity) spans Met-1–Pro-20. 2 disordered regions span residues Met-1–Ser-25 and Ala-48–Glu-73. The segment at Met-1–Thr-99 is modulating. Residues Ile-58–Ser-72 are compositionally biased toward polar residues. Positions Lys-100–Glu-175 form a DNA-binding region, nuclear receptor. Positions 103, 106, 120, and 123 each coordinate Zn(2+). The NR C4-type zinc finger occupies Cys-103–Cys-123. The segment at Lys-128–Lys-133 is nuclear localization signal. Positions 139, 145, 155, and 158 each coordinate Zn(2+). The segment at Cys-139–Cys-158 adopts an NR C4-type zinc-finger fold. A compositionally biased stretch (basic and acidic residues) spans Gln-174–Asn-186. The segment at Gln-174–Glu-196 is disordered. The tract at residues Glu-176 to Ser-192 is hinge. Residues Asn-195–Pro-426 enclose the NR LBD domain. 9-cis-retinoate-binding residues include Arg-284 and Ala-295. Residues Arg-284 and Ala-295 each coordinate all-trans-retinoate. The tract at residues Arg-316–Gly-336 is required for nuclear export. Residues Ile-415–Pro-426 form an AF-2 region.

It belongs to the nuclear hormone receptor family. NR2 subfamily. As to quaternary structure, homodimer. Heterodimer; with a rar molecule. Binds DNA preferentially as a rar/rxr heterodimer.

It localises to the nucleus. In terms of biological role, receptor for retinoic acid that acts as a transcription factor. Forms homo- or heterodimers with retinoic acid receptors (rars) and binds to target response elements in response to their ligands, all-trans or 9-cis retinoic acid, to regulate gene expression in various biological processes. The rar/rxr heterodimers bind to the retinoic acid response elements (RARE) composed of tandem 5'-AGGTCA-3' sites known as DR1-DR5 to regulate transcription. The high affinity ligand for rxrs is 9-cis retinoic acid. In the absence of ligand, the rar/rxr heterodimers associate with a multiprotein complex containing transcription corepressors that induce histone deacetylation, chromatin condensation and transcriptional suppression. On ligand binding, the corepressors dissociate from the receptors and coactivators are recruited leading to transcriptional activation. The protein is Retinoic acid receptor RXR-alpha-A of Danio rerio (Zebrafish).